The sequence spans 247 residues: Adenosylcobinamide-GDP ribazoletransferase (247 aa).

6 helical membrane-spanning segments follow: residues 31–51 (ILFY…VTCI), 55–75 (LPAL…TGGL), 109–129 (IGVL…YVLI), 135–155 (LFLI…FLTT), 183–203 (VLLL…GFLI), and 227–247 (AIEI…FYLV).

This sequence belongs to the CobS family. The cofactor is Mg(2+).

It is found in the cell inner membrane. The catalysed reaction is alpha-ribazole + adenosylcob(III)inamide-GDP = adenosylcob(III)alamin + GMP + H(+). It catalyses the reaction alpha-ribazole 5'-phosphate + adenosylcob(III)inamide-GDP = adenosylcob(III)alamin 5'-phosphate + GMP + H(+). It participates in cofactor biosynthesis; adenosylcobalamin biosynthesis; adenosylcobalamin from cob(II)yrinate a,c-diamide: step 7/7. Its function is as follows. Joins adenosylcobinamide-GDP and alpha-ribazole to generate adenosylcobalamin (Ado-cobalamin). Also synthesizes adenosylcobalamin 5'-phosphate from adenosylcobinamide-GDP and alpha-ribazole 5'-phosphate. This is Adenosylcobinamide-GDP ribazoletransferase from Acinetobacter baumannii (strain ATCC 17978 / DSM 105126 / CIP 53.77 / LMG 1025 / NCDC KC755 / 5377).